A 544-amino-acid polypeptide reads, in one-letter code: Probable protein kinase UbiB (544 aa).

The Protein kinase domain maps to 123–505 (EFDEQALASA…GRQKSHNVRS (383 aa)). ATP contacts are provided by residues 129–137 (LASASIAQV) and Lys156. The Proton acceptor role is filled by Asp291. A helical transmembrane segment spans residues 522-540 (LPLWLSCGTLVTVLLVLLL).

This sequence belongs to the ABC1 family. UbiB subfamily.

It localises to the cell inner membrane. Its pathway is cofactor biosynthesis; ubiquinone biosynthesis [regulation]. Is probably a protein kinase regulator of UbiI activity which is involved in aerobic coenzyme Q (ubiquinone) biosynthesis. This chain is Probable protein kinase UbiB, found in Actinobacillus pleuropneumoniae serotype 5b (strain L20).